Reading from the N-terminus, the 424-residue chain is MKPQWQQYIQIINQVVKPALGCTEPIAAAYAAAVARTLLPVEPESIAVQVSDNLYKNSMGVYVPGTGKIGLAIAAAAGALAGDAEAGLEVLANVTPEQVTKAQTLIDAGKVKVERTETDEFIYCCVSLTAGEQEAMVKICGGHTLIAEKRLNGELVFTADNAQAKATGSICDGIDINIESIYRFAQEVPFEEIQFILKASELNSKLSDEGMSKPYGLEVGRTMKNGIAAGIIGEDLLNKIVMLTAAASDARMGGANLPAMSNLGSGNQGIAATIPVVITAQCYKVSEEKLARALIMSHLGAIYIKSHYPPLSAFCGNTVTSAAASMAMVYLAGGSFEQSCYAIQNVISDSSGMVCDGAKASCAMKVSTSSSAAVRSFLMALSSQNVSGQGIIAKDVEKTIKNIGKMVLNGMSSTDVTIINIMSE.

Belongs to the UPF0597 family.

This chain is UPF0597 protein Shewmr7_2876, found in Shewanella sp. (strain MR-7).